We begin with the raw amino-acid sequence, 179 residues long: Large ribosomal subunit protein uL5 (179 aa).

This sequence belongs to the universal ribosomal protein uL5 family. Part of the 50S ribosomal subunit; part of the 5S rRNA/L5/L18/L25 subcomplex. Contacts the 5S rRNA and the P site tRNA. Forms a bridge to the 30S subunit in the 70S ribosome.

Functionally, this is one of the proteins that bind and probably mediate the attachment of the 5S RNA into the large ribosomal subunit, where it forms part of the central protuberance. In the 70S ribosome it contacts protein S13 of the 30S subunit (bridge B1b), connecting the 2 subunits; this bridge is implicated in subunit movement. Contacts the P site tRNA; the 5S rRNA and some of its associated proteins might help stabilize positioning of ribosome-bound tRNAs. This is Large ribosomal subunit protein uL5 from Lysinibacillus sphaericus (strain C3-41).